A 78-amino-acid polypeptide reads, in one-letter code: Cytochrome c oxidase subunit 6b-3 (78 aa).

In terms of domain architecture, CHCH spans 22-65; the sequence is TRHCFTRYIEFHRCTTAKGEDANECERFAKYYRALCPGEWVDKW. A Cx9C motif motif is present at residues 25-35; it reads CFTRYIEFHRC. Intrachain disulfides connect C25/C57 and C35/C46. The short motif at 46-57 is the Cx10C motif element; it reads CERFAKYYRALC.

It belongs to the cytochrome c oxidase subunit 6B (TC 3.D.4.8) family. As to expression, expressed in the whole plant.

Its subcellular location is the mitochondrion. In terms of biological role, this protein is one of the nuclear-coded polypeptide chains of cytochrome c oxidase, the terminal oxidase in mitochondrial electron transport. This protein may be one of the heme-binding subunits of the oxidase. This chain is Cytochrome c oxidase subunit 6b-3 (COX6B-3), found in Arabidopsis thaliana (Mouse-ear cress).